The sequence spans 923 residues: Transportin-3 (923 aa).

Met-1 carries the post-translational modification N-acetylmethionine. At Ser-74 the chain carries Phosphoserine. Thr-896 is subject to Phosphothreonine.

Interacts with (GTP-bound) Ran. Interacts with (phosphorylated) SFRS1 and SFRS2; leading to their nuclear import. Interacts with NUP62. Interacts with RBM4. Interacts with CPSF6, promoting its nuclear import. As to quaternary structure, (Microbial infection) Interacts with the HIV-1 pre-integration complex (PIC), which is composed of viral genome, matrix protein, Vpr and integrase. Interacts with HIV-1 integrase protein; the interaction is direct. Expressed in skeletal muscle.

The protein localises to the nucleus envelope. Its subcellular location is the cytoplasm. Importin, which transports target proteins into the nucleus. Specifically mediates the nuclear import of splicing factor serine/arginine (SR) proteins, such as RBM4, SFRS1 and SFRS2, by recognizing phosphorylated SR domains. Also mediates the nuclear import of serine/arginine (SR) protein CPSF6, independently of CPSF6 phosphorylation. The nuclear import process is regulated by the small GTPase Ran that partitions between cytoplasm and nucleus in the predominantly GDP- and GTP-bound form, respectively. Importin associates with target cargo proteins in the cytoplasm, and the competitive binding of GTP-bound Ran induces the release of cargos in the nucleus. Its function is as follows. (Microbial infection) Involved in immunodeficiency virus (HIV-1) infection by importing the pre-integration complex (PIC) into the nucleus. Required for a nuclear maturation step of HIV-1 prior to integration. This Homo sapiens (Human) protein is Transportin-3.